Here is a 630-residue protein sequence, read N- to C-terminus: tRNA uridine 5-carboxymethylaminomethyl modification enzyme MnmG (630 aa).

15–20 is an FAD binding site; sequence GAGHAG. Residue 274–288 participates in NAD(+) binding; the sequence is GPRYCPSIEDKIVRF.

This sequence belongs to the MnmG family. In terms of assembly, homodimer. Heterotetramer of two MnmE and two MnmG subunits. It depends on FAD as a cofactor.

It localises to the cytoplasm. Functionally, NAD-binding protein involved in the addition of a carboxymethylaminomethyl (cmnm) group at the wobble position (U34) of certain tRNAs, forming tRNA-cmnm(5)s(2)U34. The protein is tRNA uridine 5-carboxymethylaminomethyl modification enzyme MnmG of Alkaliphilus oremlandii (strain OhILAs) (Clostridium oremlandii (strain OhILAs)).